The chain runs to 70 residues: MESSRKSYVLMLFLAFVIMNVCSVSGEPKDGEIAGFEMEEARYDACVNACLEHHPNVRECEEACKNPVPP.

The signal sequence occupies residues 1-26 (MESSRKSYVLMLFLAFVIMNVCSVSG). Positions 27–42 (EPKDGEIAGFEMEEAR) are excised as a propeptide. Disulfide bonds link C46–C64 and C50–C60.

It belongs to the short scorpion toxin superfamily. Potassium channel inhibitor kappa-KTx family. Kappa-KTx 2 subfamily. Expressed by the venom gland.

The protein localises to the secreted. Its function is as follows. Voltage-independently blocks potassium currents on hKv1.1/KCNA1 (IC(50)=217 uM), and hKv1.4/KCNA4 (IC(50)=71 uM) (expressed in CHO cells). The sequence is that of Potassium channel toxin kappa-KTx 2.5 from Opisthacanthus cayaporum (South American scorpion).